Reading from the N-terminus, the 316-residue chain is MEQNLNSEQKPQSSAKPRGKSSRSTILAQTVKTGIIKSNLIPMWAGLTLGMYKNKMTFIDNIPEMIFSTVGSALVIGAAGAFNNVYDRDIDAIMPRTQSRPTVTGEMSAKSTLSLAIVMLIIGLAVLALASPLAAAFGLLGVFLYVVPYTMWTKRRTIYNTEIGSISGAVPPLIGWSAVSTDITHPAIARFIFVMVIWQMPHFYAIAIRKRVDYEAASVPMLPVVKGMRRTYYQTNFYLILLILSSFLFGSLSVGIMLVALLLSIAWLVMSIYGYHSNKDQVKWATKMFVFSLFHMTILFTTVIVYSLVGVIFKLY.

Over residues 1–15 (MEQNLNSEQKPQSSA) the composition is skewed to polar residues. Positions 1–24 (MEQNLNSEQKPQSSAKPRGKSSRS) are disordered. 7 consecutive transmembrane segments (helical) span residues 62–82 (IPEM…AGAF), 117–137 (IVML…AAAF), 163–183 (IGSI…STDI), 188–208 (IARF…AIAI), 231–251 (TYYQ…LFGS), 252–272 (LSVG…VMSI), and 293–313 (LFHM…GVIF).

It belongs to the UbiA prenyltransferase family. Protoheme IX farnesyltransferase subfamily. In terms of assembly, interacts with CtaA.

The protein resides in the cell membrane. It catalyses the reaction heme b + (2E,6E)-farnesyl diphosphate + H2O = Fe(II)-heme o + diphosphate. Its pathway is porphyrin-containing compound metabolism; heme O biosynthesis; heme O from protoheme: step 1/1. Its function is as follows. Converts heme B (protoheme IX) to heme O by substitution of the vinyl group on carbon 2 of heme B porphyrin ring with a hydroxyethyl farnesyl side group. In Lysinibacillus sphaericus (strain C3-41), this protein is Protoheme IX farnesyltransferase 2.